The primary structure comprises 147 residues: MKEVSVPATKRIALVAHDNRKEDLVSWVKAHREILSKHRLFGTGTTGKLISEETGLPVTRFLSGPLGGDQQIGAKIAEGDLDIVVFFWDPLTAQPHDPDVKALLRIAVLYNVPMACNRSTADYMISSPQFTISYEKVLLNFELLCES.

Positions 4-147 (VSVPATKRIA…LLNFELLCES (144 aa)) constitute an MGS-like domain. Residues histidine 17, lysine 21, 43 to 46 (TGTT), and 63 to 64 (SG) each bind substrate. The active-site Proton donor/acceptor is aspartate 69. Position 96 (histidine 96) interacts with substrate.

This sequence belongs to the methylglyoxal synthase family.

It catalyses the reaction dihydroxyacetone phosphate = methylglyoxal + phosphate. Catalyzes the formation of methylglyoxal from dihydroxyacetone phosphate. The sequence is that of Methylglyoxal synthase from Leptospira borgpetersenii serovar Hardjo-bovis (strain JB197).